The sequence spans 683 residues: Actin-binding LIM protein 3 (683 aa).

N-acetylmethionine is present on Met1. LIM zinc-binding domains lie at 21–80 (IQCY…LYGT), 80–140 (TRCD…MASS), 149–208 (SHCA…QFGI), and 208–268 (IKCE…ARAE). Phosphoserine occurs at positions 277, 280, 282, 286, 290, 337, 372, and 373. The interval 372–472 (SSPGYIDSPT…EDISQTSKYS (101 aa)) is disordered. Residue Tyr376 is modified to Phosphotyrosine. Ser379 and Ser388 each carry phosphoserine. Polar residues-rich tracts occupy residues 380-393 (PTYS…TFSR), 406-426 (GRSS…TSYQ), and 454-471 (STAT…TSKY). A phosphoserine mark is found at Ser493, Ser503, and Ser504. Position 543 is a phosphothreonine (Thr543). Ser567, Ser576, and Ser607 each carry phosphoserine. In terms of domain architecture, HP spans 615–683 (MREYKIYPYE…NELKKQARLF (69 aa)). Arg631 bears the Omega-N-methylarginine mark.

Directly interacts with F-actin and ABRA. In terms of tissue distribution, expressed predominantly in heart and brain.

Its subcellular location is the cytoplasm. May act as scaffold protein. May stimulate ABRA activity and ABRA-dependent SRF transcriptional activity. The protein is Actin-binding LIM protein 3 (ABLIM3) of Homo sapiens (Human).